The primary structure comprises 813 residues: G-type lectin S-receptor-like serine/threonine-protein kinase LECRK1 (813 aa).

Residues 1–19 (MVALLLFPMLLQLLSPTCA) form the signal peptide. Residues 20–466 (QTQKNITLGS…NRKHWVLGSS (447 aa)) lie on the Extracellular side of the membrane. Positions 22–149 (QKNITLGSTL…DGTTKWQTFD (128 aa)) constitute a Bulb-type lectin domain. N-linked (GlcNAc...) asparagine glycans are attached at residues N24, N57, N164, N168, N219, and N242. The EGF-like; atypical domain maps to 293 to 346 (PQNICHAIVSDVGSGVCGFNSYCTFDGTRNQIASCQCPPWYKFFDEQKKYKGCK). Cystine bridges form between C297–C315, C309–C327, C329–C345, C391–C413, and C395–C401. The PAN domain maps to 354 to 433 (CDLEEATALA…NMADYVQRTV (80 aa)). N-linked (GlcNAc...) asparagine glycans are attached at residues N407 and N441. A helical transmembrane segment spans residues 467–487 (LILGTSILVNFALISIFLFGT). Over 488-813 (YCRITTKKNI…DPCSFISSLP (326 aa)) the chain is Cytoplasmic. A Protein kinase domain is found at 523 to 797 (AGFHEILGAG…KVTQMLDGAV (275 aa)). Residues 529–537 (LGAGASGVV) and K553 each bind ATP. The active-site Proton acceptor is the D647.

This sequence belongs to the protein kinase superfamily. Ser/Thr protein kinase family. In terms of assembly, interacts (via kinase domain) with ADF4. As to expression, expressed in plumules, radicles and panicles.

It localises to the membrane. It carries out the reaction L-seryl-[protein] + ATP = O-phospho-L-seryl-[protein] + ADP + H(+). It catalyses the reaction L-threonyl-[protein] + ATP = O-phospho-L-threonyl-[protein] + ADP + H(+). In terms of biological role, involved in innate immunity. Required for the expression of defense-related genes PR1A, LOX2 and CHS1 upon biotic stresses. Required for basal resistance to the fungal blast (M.grisea), bacterial blight (O.oryzae pv. oryzae, Xoo) and the herbivorous insect brown planthopper (N.lugens, BPH). May be involved in several defense signaling pathways. Involved in the promotion of seed germination. Required for the expression of alpha-amylase genes during seed germination. Involved in resistance against the brown planthopper (BPH). Member of the BPH3 (BPH resistance locus 3) cluster which contains LECRK1, LECRK2 and LECRK3. The protein is G-type lectin S-receptor-like serine/threonine-protein kinase LECRK1 of Oryza sativa subsp. indica (Rice).